A 340-amino-acid polypeptide reads, in one-letter code: Complement decay-accelerating factor (340 aa).

Sushi domains follow at residues 1-55, 56-119, 120-181, and 182-244; these read VPNA…FCNR, SCEV…FCKK, KSCP…ECRE, and IYCP…ECRG. Cysteine 24 and cysteine 53 form a disulfide bridge. The N-linked (GlcNAc...) asparagine glycan is linked to asparagine 54. Intrachain disulfides connect cysteine 57–cysteine 104, cysteine 88–cysteine 117, cysteine 122–cysteine 163, cysteine 149–cysteine 179, cysteine 184–cysteine 226, and cysteine 212–cysteine 242. N-linked (GlcNAc...) asparagine glycosylation occurs at asparagine 107. Residues 235 to 317 are disordered; the sequence is WSGPPPECRG…SGTTSGTTSL (83 aa). Over residues 246–268 the composition is skewed to polar residues; sequence SLTSKVPPTVQKPTTVNVPTTEV. Low complexity-rich tracts occupy residues 269–287 and 307–317; these read SPTSQKTTTKTTTPNAQAT and GSGTTSGTTSL. Serine 312 is lipidated: GPI-anchor amidated serine. Residues 313-340 constitute a propeptide, removed in mature form; the sequence is GTTSLLSGHKCFTLTGLLGTLVTMGLLT.

This sequence belongs to the receptors of complement activation (RCA) family. In terms of assembly, monomer (major form) and non-disulfide-linked, covalent homodimer (minor form). Interacts with ADGRE5. The Ser/Thr-rich domain is heavily O-glycosylated.

The protein localises to the cell membrane. This protein recognizes C4b and C3b fragments that condense with cell-surface hydroxyl or amino groups when nascent C4b and C3b are locally generated during C4 and c3 activation. Interaction of daf with cell-associated C4b and C3b polypeptides interferes with their ability to catalyze the conversion of C2 and factor B to enzymatically active C2a and Bb and thereby prevents the formation of C4b2a and C3bBb, the amplification convertases of the complement cascade. Inhibits complement activation by destabilizing and preventing the formation of C3 and C5 convertases, which prevents complement damage. The polypeptide is Complement decay-accelerating factor (CD55) (Pongo pygmaeus (Bornean orangutan)).